The following is a 114-amino-acid chain: RNA polymerase-binding protein RbpA (114 aa).

Belongs to the RNA polymerase-binding protein RbpA family. Monomer. Forms a complex with the RNAP catalytic core, specifically with the beta subunit (RpoB); its binding site may overlap with that of Rif. May bind free principal sigma factors.

Binds to RNA polymerase (RNAP), probably stimulating transcriptions from principal, but not alternative sigma factor promoters. Partially restores transcription in the presence of rifampicin (Rif) in vitro; overexpression leads to an increase in the Rif tolerance in vivo, with smaller colonies. Seems to act by removing Rif from its binding site and preventing its further binding. No longer stimulates transcription in Rif-resistant RNA polymerase (with mutations in rpoB). This Mycolicibacterium smegmatis (strain ATCC 700084 / mc(2)155) (Mycobacterium smegmatis) protein is RNA polymerase-binding protein RbpA.